Here is a 642-residue protein sequence, read N- to C-terminus: Glutamyl-tRNA(Gln) amidotransferase subunit E (642 aa).

The protein belongs to the GatB/GatE family. GatE subfamily. As to quaternary structure, heterodimer of GatD and GatE.

The catalysed reaction is L-glutamyl-tRNA(Gln) + L-glutamine + ATP + H2O = L-glutaminyl-tRNA(Gln) + L-glutamate + ADP + phosphate + H(+). Allows the formation of correctly charged Gln-tRNA(Gln) through the transamidation of misacylated Glu-tRNA(Gln) in organisms which lack glutaminyl-tRNA synthetase. The reaction takes place in the presence of glutamine and ATP through an activated gamma-phospho-Glu-tRNA(Gln). The GatDE system is specific for glutamate and does not act on aspartate. This chain is Glutamyl-tRNA(Gln) amidotransferase subunit E, found in Aeropyrum pernix (strain ATCC 700893 / DSM 11879 / JCM 9820 / NBRC 100138 / K1).